Reading from the N-terminus, the 257-residue chain is 1-(5-phosphoribosyl)-5-[(5-phosphoribosylamino)methylideneamino] imidazole-4-carboxamide isomerase (257 aa).

The active-site Proton acceptor is aspartate 8. Aspartate 129 (proton donor) is an active-site residue.

Belongs to the HisA/HisF family.

The protein resides in the cytoplasm. It catalyses the reaction 1-(5-phospho-beta-D-ribosyl)-5-[(5-phospho-beta-D-ribosylamino)methylideneamino]imidazole-4-carboxamide = 5-[(5-phospho-1-deoxy-D-ribulos-1-ylimino)methylamino]-1-(5-phospho-beta-D-ribosyl)imidazole-4-carboxamide. Its pathway is amino-acid biosynthesis; L-histidine biosynthesis; L-histidine from 5-phospho-alpha-D-ribose 1-diphosphate: step 4/9. This chain is 1-(5-phosphoribosyl)-5-[(5-phosphoribosylamino)methylideneamino] imidazole-4-carboxamide isomerase, found in Gloeothece citriformis (strain PCC 7424) (Cyanothece sp. (strain PCC 7424)).